The sequence spans 126 residues: Holo-[acyl-carrier-protein] synthase (126 aa).

Residues D9 and E58 each contribute to the Mg(2+) site.

It belongs to the P-Pant transferase superfamily. AcpS family. Mg(2+) is required as a cofactor.

The protein localises to the cytoplasm. It carries out the reaction apo-[ACP] + CoA = holo-[ACP] + adenosine 3',5'-bisphosphate + H(+). Transfers the 4'-phosphopantetheine moiety from coenzyme A to a Ser of acyl-carrier-protein. The polypeptide is Holo-[acyl-carrier-protein] synthase (Aliivibrio fischeri (strain MJ11) (Vibrio fischeri)).